The sequence spans 209 residues: Uracil phosphoribosyltransferase (209 aa).

5-phospho-alpha-D-ribose 1-diphosphate contacts are provided by residues R79, R104, and 131 to 139; that span reads DPMLATGGT. Uracil contacts are provided by residues I194 and 199–201; that span reads GDA. D200 serves as a coordination point for 5-phospho-alpha-D-ribose 1-diphosphate.

It belongs to the UPRTase family. Requires Mg(2+) as cofactor.

It carries out the reaction UMP + diphosphate = 5-phospho-alpha-D-ribose 1-diphosphate + uracil. It participates in pyrimidine metabolism; UMP biosynthesis via salvage pathway; UMP from uracil: step 1/1. Its activity is regulated as follows. Allosterically activated by GTP. Its function is as follows. Catalyzes the conversion of uracil and 5-phospho-alpha-D-ribose 1-diphosphate (PRPP) to UMP and diphosphate. In Pseudoalteromonas translucida (strain TAC 125), this protein is Uracil phosphoribosyltransferase.